Reading from the N-terminus, the 175-residue chain is Co-chaperone protein HscB homolog (175 aa).

Residues 7 to 79 form the J domain; the sequence is SHFDLFDLPA…LKRATYLLHL (73 aa).

This sequence belongs to the HscB family. Interacts with HscA and stimulates its ATPase activity.

Co-chaperone involved in the maturation of iron-sulfur cluster-containing proteins. Seems to help targeting proteins to be folded toward HscA. The sequence is that of Co-chaperone protein HscB homolog from Paraburkholderia xenovorans (strain LB400).